Reading from the N-terminus, the 307-residue chain is N-acetylmuramic acid 6-phosphate etherase (307 aa).

The SIS domain occupies 59 to 222; the sequence is TADRLRQGGR…STGVMVKLGK (164 aa). Residue Glu-87 is the Proton donor of the active site. Glu-118 is an active-site residue.

The protein belongs to the GCKR-like family. MurNAc-6-P etherase subfamily. In terms of assembly, homodimer.

It catalyses the reaction N-acetyl-D-muramate 6-phosphate + H2O = N-acetyl-D-glucosamine 6-phosphate + (R)-lactate. It participates in amino-sugar metabolism; N-acetylmuramate degradation. Specifically catalyzes the cleavage of the D-lactyl ether substituent of MurNAc 6-phosphate, producing GlcNAc 6-phosphate and D-lactate. This chain is N-acetylmuramic acid 6-phosphate etherase, found in Nostoc sp. (strain PCC 7120 / SAG 25.82 / UTEX 2576).